Reading from the N-terminus, the 152-residue chain is Ribonuclease H (152 aa).

The region spanning 1–142 (MNSKVVIYTD…ADKLAVQGRE (142 aa)) is the RNase H type-1 domain. The Mg(2+) site is built by Asp-10, Glu-48, Asp-70, and Asp-134.

It belongs to the RNase H family. As to quaternary structure, monomer. It depends on Mg(2+) as a cofactor.

It is found in the cytoplasm. The enzyme catalyses Endonucleolytic cleavage to 5'-phosphomonoester.. Endonuclease that specifically degrades the RNA of RNA-DNA hybrids. This is Ribonuclease H from Rickettsia akari (strain Hartford).